A 91-amino-acid chain; its full sequence is Ragulator complex protein LAMTOR5 homolog (91 aa).

Belongs to the LAMTOR5 family. Part of the Ragulator complex.

The protein localises to the cytoplasm. It localises to the lysosome. In terms of biological role, regulator of the TOR pathway, a signaling cascade that promotes cell growth in response to growth factors, energy levels, and amino acids. As part of the Ragulator complex, may activate the TOR signaling cascade in response to amino acids. This Nematostella vectensis (Starlet sea anemone) protein is Ragulator complex protein LAMTOR5 homolog.